Consider the following 520-residue polypeptide: MAEISHPPMEQLQDLEYCIDSNPPWPETVLLAFQNYILMLGTSAFIPALLVPAMGGSDGDRARVIQTLLFVAGIKTLLQALFGTRLPAVVGGSLAYVVPIAYIINDSSLQKISNDHERFIHTMRAIQGALIVASSIQIILGYSQVWGLFSRFFSPLGMAPVVGLVGLGMFQRGFPQLGNCIEIGLPMLLLVIGLTQYLKHVRPFKDVPIFERFPILICVTIVWIYAVILTASGAYRGKPSLTQHSCRTDKANLISTAPWFKFPYPLQWGPPTFSVGHSFAMMSAVLVSMVESTGAYIAASRLAIATPPPAYVLSRGIGWQGIGVLLDGLFGTGTGSTVLVENVGLLGLTRVGSRRVVQVSAGFMIVFSTLGKFGAVFASIPVPIYAALHCILFGLVAAVGLSFLQFTNMNSMRNLMITGLSLFLGISIPQFFAQYWDARHYGLVHTNAGWFNAFLNTLFMSPATVGLIIAVFMDNTMEVERSKKDRGMPWWVKFRTFRGDNRNEEFYTLPFNLNRFFPPT.

12 helical membrane-spanning segments follow: residues 36–56, 64–84, 86–106, 129–149, 150–170, 174–194, 213–233, 279–299, 362–382, 384–404, 415–435, and 453–473; these read YILMLGTSAFIPALLVPAMGG, VIQTLLFVAGIKTLLQALFGT, LPAVVGGSLAYVVPIAYIIND, ALIVASSIQIILGYSQVWGLF, SRFFSPLGMAPVVGLVGLGMF, FPQLGNCIEIGLPMLLLVIGL, FPILICVTIVWIYAVILTASG, FAMMSAVLVSMVESTGAYIAA, GFMIVFSTLGKFGAVFASIPV, IYAALHCILFGLVAAVGLSFL, LMITGLSLFLGISIPQFFAQY, and AFLNTLFMSPATVGLIIAVFM.

The protein belongs to the nucleobase:cation symporter-2 (NCS2) (TC 2.A.40) family. In terms of tissue distribution, expressed in cotyledons 4 days after imbibition (DAI). Expressed in the minor and major veins of cotyledons and leaves, in the shoot apex and pedicels. Expressed in the root meristems, root tips and lateral root primordia.

It is found in the membrane. This Arabidopsis thaliana (Mouse-ear cress) protein is Nucleobase-ascorbate transporter 1 (NAT1).